We begin with the raw amino-acid sequence, 473 residues long: Fumarate hydratase class II (473 aa).

Substrate-binding positions include 105–107, 130–133, 140–142, and Thr188; these read SGT, HPND, and SSN. His189 functions as the Proton donor/acceptor in the catalytic mechanism. Ser319 is an active-site residue. Substrate contacts are provided by residues Ser320 and 325–327; that span reads KVN.

This sequence belongs to the class-II fumarase/aspartase family. Fumarase subfamily. As to quaternary structure, homotetramer.

The protein localises to the cytoplasm. The enzyme catalyses (S)-malate = fumarate + H2O. The protein operates within carbohydrate metabolism; tricarboxylic acid cycle; (S)-malate from fumarate: step 1/1. In terms of biological role, involved in the TCA cycle. Catalyzes the stereospecific interconversion of fumarate to L-malate. The protein is Fumarate hydratase class II of Xylella fastidiosa (strain Temecula1 / ATCC 700964).